Consider the following 252-residue polypeptide: 5'-nucleotidase SurE (252 aa).

A divalent metal cation is bound by residues D8, D9, S39, and N95.

This sequence belongs to the SurE nucleotidase family. A divalent metal cation serves as cofactor.

The protein localises to the cytoplasm. The catalysed reaction is a ribonucleoside 5'-phosphate + H2O = a ribonucleoside + phosphate. In terms of biological role, nucleotidase that shows phosphatase activity on nucleoside 5'-monophosphates. The sequence is that of 5'-nucleotidase SurE from Clostridium botulinum (strain Kyoto / Type A2).